A 668-amino-acid chain; its full sequence is Methionine--tRNA ligase (668 aa).

Positions 11 to 21 (AYTNGPLHIGH) match the 'HIGH' region motif. Residues Cys146, Cys149, Cys159, and Cys162 each contribute to the Zn(2+) site. The short motif at 332–336 (KMSTS) is the 'KMSKS' region element. ATP is bound at residue Thr335. One can recognise a tRNA-binding domain in the interval 567-668 (EFNRLDLRVG…REVEPGERIR (102 aa)).

This sequence belongs to the class-I aminoacyl-tRNA synthetase family. MetG type 1 subfamily. Homodimer. Zn(2+) is required as a cofactor.

It is found in the cytoplasm. It carries out the reaction tRNA(Met) + L-methionine + ATP = L-methionyl-tRNA(Met) + AMP + diphosphate. Its function is as follows. Is required not only for elongation of protein synthesis but also for the initiation of all mRNA translation through initiator tRNA(fMet) aminoacylation. This Methanopyrus kandleri (strain AV19 / DSM 6324 / JCM 9639 / NBRC 100938) protein is Methionine--tRNA ligase.